The following is a 191-amino-acid chain: LHFPL tetraspan subfamily member 7 protein (191 aa).

Helical transmembrane passes span 6 to 26 (MGSL…FSLM), 72 to 92 (IAAV…VLVL), 112 to 132 (YAQI…PFNL), and 154 to 174 (LGWG…LPFI).

It belongs to the TMEM211 family.

The protein localises to the membrane. The protein is LHFPL tetraspan subfamily member 7 protein (lhfpl7) of Xenopus tropicalis (Western clawed frog).